We begin with the raw amino-acid sequence, 416 residues long: CBL-interacting serine/threonine-protein kinase 21 (416 aa).

The Protein kinase domain occupies 12–264 (YEIGRTIGEG…AEIIIKDSWF (253 aa)). ATP is bound by residues 18 to 26 (IGEGNFAKV) and Lys-41. Asp-134 (proton acceptor) is an active-site residue. An activation loop region spans residues 152–178 (DFGLSAVPKSGDMLSTACGSPCYIAPE). Ser-156 carries the phosphoserine modification. Thr-167 is subject to Phosphothreonine. One can recognise an NAF domain in the interval 291 to 315 (ASSNFINAFQIIAMSSDLDLSGLFE). A PPI region spans residues 321–351 (RYKTRIGSKNTAQETIKKIEAAATYVSLSVE).

It belongs to the protein kinase superfamily. CAMK Ser/Thr protein kinase family. SNF1 subfamily. As to quaternary structure, interacts with CBL9. Requires Mn(2+) as cofactor.

The enzyme catalyses L-seryl-[protein] + ATP = O-phospho-L-seryl-[protein] + ADP + H(+). It carries out the reaction L-threonyl-[protein] + ATP = O-phospho-L-threonyl-[protein] + ADP + H(+). Functionally, CIPK serine-threonine protein kinases interact with CBL proteins. Binding of a CBL protein to the regulatory NAF domain of CIPK protein lead to the activation of the kinase in a calcium-dependent manner. The protein is CBL-interacting serine/threonine-protein kinase 21 (CIPK21) of Arabidopsis thaliana (Mouse-ear cress).